The following is a 331-amino-acid chain: Ketol-acid reductoisomerase (NADP(+)) (331 aa).

The KARI N-terminal Rossmann domain occupies 2–182 (AQLFYDSDAD…GGTRAGILET (181 aa)). Residues 25–28 (YGSQ), serine 51, serine 53, and 83–86 (DEFQ) each bind NADP(+). The active site involves histidine 108. Glycine 134 contributes to the NADP(+) binding site. A KARI C-terminal knotted domain is found at 183-328 (NFKEETETDL…KGLRSMFSWL (146 aa)). 4 residues coordinate Mg(2+): aspartate 191, glutamate 195, glutamate 227, and glutamate 231. Serine 252 contributes to the substrate binding site.

It belongs to the ketol-acid reductoisomerase family. It depends on Mg(2+) as a cofactor.

It carries out the reaction (2R)-2,3-dihydroxy-3-methylbutanoate + NADP(+) = (2S)-2-acetolactate + NADPH + H(+). The enzyme catalyses (2R,3R)-2,3-dihydroxy-3-methylpentanoate + NADP(+) = (S)-2-ethyl-2-hydroxy-3-oxobutanoate + NADPH + H(+). Its pathway is amino-acid biosynthesis; L-isoleucine biosynthesis; L-isoleucine from 2-oxobutanoate: step 2/4. It participates in amino-acid biosynthesis; L-valine biosynthesis; L-valine from pyruvate: step 2/4. Functionally, involved in the biosynthesis of branched-chain amino acids (BCAA). Catalyzes an alkyl-migration followed by a ketol-acid reduction of (S)-2-acetolactate (S2AL) to yield (R)-2,3-dihydroxy-isovalerate. In the isomerase reaction, S2AL is rearranged via a Mg-dependent methyl migration to produce 3-hydroxy-3-methyl-2-ketobutyrate (HMKB). In the reductase reaction, this 2-ketoacid undergoes a metal-dependent reduction by NADPH to yield (R)-2,3-dihydroxy-isovalerate. The protein is Ketol-acid reductoisomerase (NADP(+)) of Parasynechococcus marenigrum (strain WH8102).